Here is a 382-residue protein sequence, read N- to C-terminus: tRNA (guanine(37)-N(1))-methyltransferase (382 aa).

S-adenosyl-L-methionine-binding positions include His205, 243–244 (DL), 269–270 (DA), and Asn291.

This sequence belongs to the class I-like SAM-binding methyltransferase superfamily. TRM5/TYW2 family. Monomer.

The protein resides in the mitochondrion matrix. It localises to the nucleus. The protein localises to the cytoplasm. It carries out the reaction guanosine(37) in tRNA + S-adenosyl-L-methionine = N(1)-methylguanosine(37) in tRNA + S-adenosyl-L-homocysteine + H(+). Specifically methylates the N1 position of guanosine-37 in various cytoplasmic and mitochondrial tRNAs. Methylation is not dependent on the nature of the nucleoside 5' of the target nucleoside. This is the first step in the biosynthesis of wybutosine (yW), a modified base adjacent to the anticodon of tRNAs and required for accurate decoding. The chain is tRNA (guanine(37)-N(1))-methyltransferase from Entamoeba histolytica (strain ATCC 30459 / HM-1:IMSS / ABRM).